We begin with the raw amino-acid sequence, 344 residues long: Trace amine-associated receptor 8a (344 aa).

The Extracellular segment spans residues 1–33 (MTSNFSQAPLQLCYENVNASCIKTPYSPGLRVL). Residues Asn-4 and Asn-18 are each glycosylated (N-linked (GlcNAc...) asparagine). 2 disulfide bridges follow: Cys-21-Cys-185 and Cys-96-Cys-189. A helical membrane pass occupies residues 34-54 (LYMVFGFGAVLAVCGNLLVVI). Residues 55–67 (SVLHFKQLHSPAN) are Cytoplasmic-facing. Residues 68 to 88 (FLIASLASADFLVGISVMPFS) traverse the membrane as a helical segment. The Extracellular segment spans residues 89 to 102 (MVRSIESCWYFGDT). The chain crosses the membrane as a helical span at residues 103–127 (FCSLHSCCDAAFCYSSLFHLCFISV). Residues 128–146 (DRYIAVTDPLVYPTKFTVS) lie on the Cytoplasmic side of the membrane. Residues 147–167 (VSGICISISWILPLVYSSAVF) form a helical membrane-spanning segment. Residues 168 to 196 (YTGISATGIENLVSALNCVGGCQIVVNQD) are Extracellular-facing. The chain crosses the membrane as a helical span at residues 197-217 (WVLIDFLLFLIPTLVMIILYS). At 218 to 260 (KIFLVAKQQAVKIETSISGSKGESSLESHKARVAKRERKAAKT) the chain is on the cytoplasmic side. The helical transmembrane segment at 261–281 (LGVTVVAFMVSWLPYTIDTLI) threads the bilayer. Topologically, residues 282–291 (DAFMGFITPA) are extracellular. The chain crosses the membrane as a helical span at residues 292-314 (YVYEICCWSAYYNSAMNPLIYAF). Topologically, residues 315 to 344 (FYPWFRKAIKLILSGEILKSHSSTMSLFSE) are cytoplasmic.

This sequence belongs to the G-protein coupled receptor 1 family.

It localises to the cell membrane. Olfactory receptor activated by trace amines. Trace amine compounds are enriched in animal body fluids and act on trace amine-associated receptors (TAARs) to elicit both intraspecific and interspecific innate behaviors. Ligand-binding causes a conformation change that triggers signaling via G(s)-class of G alpha proteins (GNAL or GNAS). This chain is Trace amine-associated receptor 8a, found in Rattus norvegicus (Rat).